The primary structure comprises 234 residues: Small ribosomal subunit protein eS1y (234 aa).

Residues 1–18 (MAVGKNKRISKGKKGGKK) are compositionally biased toward basic residues. Positions 1–20 (MAVGKNKRISKGKKGGKKKA) are disordered.

The protein belongs to the eukaryotic ribosomal protein eS1 family. As to quaternary structure, component of the small ribosomal subunit. Mature ribosomes consist of a small (40S) and a large (60S) subunit. The 40S subunit contains about 33 different proteins and 1 molecule of RNA (18S). The 60S subunit contains about 49 different proteins and 3 molecules of RNA (25S, 5.8S and 5S).

The protein resides in the cytoplasm. This Vitis vinifera (Grape) protein is Small ribosomal subunit protein eS1y.